Consider the following 34-residue polypeptide: Antimicrobial peptide Alo-1 (34 aa).

Intrachain disulfides connect Cys-1/Cys-18, Cys-8/Cys-22, and Cys-17/Cys-33.

The protein resides in the secreted. Its function is as follows. Has antifungal activity against C.glabrata. This Acrocinus longimanus (Giant harlequin beetle) protein is Antimicrobial peptide Alo-1.